A 71-amino-acid polypeptide reads, in one-letter code: uncharacterized protein (71 aa).

Residues proline 15–tyrosine 71 form the Sm domain.

This is an uncharacterized protein from Methanocaldococcus jannaschii (strain ATCC 43067 / DSM 2661 / JAL-1 / JCM 10045 / NBRC 100440) (Methanococcus jannaschii).